A 758-amino-acid chain; its full sequence is Glucan endo-1,3-beta-D-glucosidase (758 aa).

A signal peptide (tat-type signal) is located at residues 1–34 (MSHASRRRWRRATTSAATAALLCGALLTFPSAPA). The tract at residues 38-251 (VRLGSGSYTT…SGYASVALLP (214 aa)) is beta-sandwich subdomain. A GH81 domain is found at 38–704 (VRLGSGSYTT…QWLSTLAEFG (667 aa)). The alpha/beta subdomain stretch occupies residues 252-342 (SPDDFDRYAP…EGDRFTTELT (91 aa)). Residues 352–704 (TVDSADHQRL…QWLSTLAEFG (353 aa)) form a (alpha/beta)6 barrel subdomain region. Tyr-382, Lys-386, Asp-457, His-461, Asn-532, Glu-534, and Glu-538 together coordinate (1,3-beta-D-glucosyl)n. Residue Asp-457 is part of the active site. Active-site residues include Glu-534 and Glu-538.

The protein belongs to the glycosyl hydrolase 81 family. Predicted to be exported by the Tat system. The position of the signal peptide cleavage has not been experimentally proven.

The protein localises to the secreted. The enzyme catalyses Hydrolysis of (1-&gt;3)-beta-D-glucosidic linkages in (1-&gt;3)-beta-D-glucans.. Its function is as follows. Cleaves internal linkages in 1,3-beta-glucan. May contribute to biomass degradation by hydrolyzing the 1,3-beta-linked plant polymer callose that is present in decomposing plant tissue. The polypeptide is Glucan endo-1,3-beta-D-glucosidase (Thermobifida fusca (strain YX)).